The following is a 901-amino-acid chain: Valine--tRNA ligase (901 aa).

The tract at residues 1–37 is disordered; that stretch reads MLPGCYTHRLNMSDTQDPPQDESTTDESADALDGEYD. The span at 19 to 35 shows a compositional bias: acidic residues; sequence PQDESTTDESADALDGE. The short motif at 72-82 is the 'HIGH' region element; the sequence is PTVSGNLHMGH. Residues 572–576 carry the 'KMSKS' region motif; that stretch reads AMSKS. K575 is an ATP binding site.

Belongs to the class-I aminoacyl-tRNA synthetase family. ValS type 2 subfamily.

The protein resides in the cytoplasm. It catalyses the reaction tRNA(Val) + L-valine + ATP = L-valyl-tRNA(Val) + AMP + diphosphate. Its function is as follows. Catalyzes the attachment of valine to tRNA(Val). As ValRS can inadvertently accommodate and process structurally similar amino acids such as threonine, to avoid such errors, it has a 'posttransfer' editing activity that hydrolyzes mischarged Thr-tRNA(Val) in a tRNA-dependent manner. In Haloarcula marismortui (strain ATCC 43049 / DSM 3752 / JCM 8966 / VKM B-1809) (Halobacterium marismortui), this protein is Valine--tRNA ligase.